Reading from the N-terminus, the 307-residue chain is MAKISVIGAGNVGATTVQRLAELELGEIVMTDIVEGLPQGKALDLIQAGAIKGYDTSIIGTNDYAEIVDSDLVIITAGIARKPGMTREDLIKTNSKIIAEVSRNIAKYAPDSIVINVTNPLDIITYIAMKSTGFETKKVFGMSGVLDSGRFASFIAEELKCSKKDVQAMVIGGHGDLMVPLPQYTTVSGVPLTDLLPGDRIARLVERTVNGGAEIVELLKQGSAFYAPSAAIVSMAEAVIKNSKRILPASAYLEGHYGQEGIYFGVPVKLGASGVEEILELKLDESQYETLRKSSETIRNTISQLEI.

NAD(+) is bound by residues 8 to 13 and aspartate 32; that span reads GAGNVG. Residues arginine 81 and arginine 87 each coordinate substrate. NAD(+) is bound by residues asparagine 94 and 117–119; that span reads VTN. The substrate site is built by asparagine 119 and arginine 150. Residue histidine 174 is the Proton acceptor of the active site.

It belongs to the LDH/MDH superfamily.

It carries out the reaction (S)-malate + NAD(+) = oxaloacetate + NADH + H(+). Functionally, catalyzes the reversible oxidation of malate to oxaloacetate. The protein is Malate dehydrogenase (mdh) of Methanosarcina barkeri (strain Fusaro / DSM 804).